Here is a 459-residue protein sequence, read N- to C-terminus: Probable D-serine dehydratase (459 aa).

Residue lysine 119 is modified to N6-(pyridoxal phosphate)lysine.

The protein belongs to the serine/threonine dehydratase family. DsdA subfamily. The cofactor is pyridoxal 5'-phosphate.

The catalysed reaction is D-serine = pyruvate + NH4(+). In Geobacillus stearothermophilus (Bacillus stearothermophilus), this protein is Probable D-serine dehydratase.